The primary structure comprises 385 residues: ADP,ATP carrier protein 2, mitochondrial (385 aa).

A mitochondrion-targeting transit peptide spans 1–74 (MVEQTQHPTI…ATTTSPVFVQ (74 aa)). Solcar repeat units follow at residues 82 to 175 (TNFA…FKRL), 187 to 280 (KWFA…VKPV), and 288 to 374 (DSFF…LQLI). 5 consecutive transmembrane segments (helical) span residues 84-111 (FAID…VKLL), 152-176 (TANV…KRLF), 185-205 (YWKW…SSLL), 256-277 (FNIS…YDSV), and 291-311 (FASF…SYPI). Positions 157 and 169 each coordinate ADP. Position 315 (R315) interacts with ADP. An important for transport activity region spans residues 315-320 (RRRMMM). Residues 315-320 (RRRMMM) carry the Nucleotide carrier signature motif motif. A helical membrane pass occupies residues 351 to 371 (AGANILRAVAGAGVLAGYDKL).

It belongs to the mitochondrial carrier (TC 2.A.29) family. In terms of assembly, monomer.

Its subcellular location is the mitochondrion inner membrane. The catalysed reaction is ADP(in) + ATP(out) = ADP(out) + ATP(in). With respect to regulation, the matrix-open state (m-state) is inhibited by the membrane-permeable bongkrekic acid (BKA). The cytoplasmic-open state (c-state) is inhibited by the membrane-impermeable toxic inhibitor carboxyatractyloside (CATR). Functionally, ADP:ATP antiporter that mediates import of ADP into the mitochondrial matrix for ATP synthesis, and export of ATP out to fuel the cell. Cycles between the cytoplasmic-open state (c-state) and the matrix-open state (m-state): operates by the alternating access mechanism with a single substrate-binding site intermittently exposed to either the cytosolic (c-state) or matrix (m-state) side of the inner mitochondrial membrane. The chain is ADP,ATP carrier protein 2, mitochondrial (AAC2) from Arabidopsis thaliana (Mouse-ear cress).